The chain runs to 286 residues: Pre-mRNA-processing protein 45 (286 aa).

Disordered regions lie at residues 111 to 146 and 253 to 286; these read TNDINYIKYENPNPNPNPNPNPNQEQQQQSSSSSSK and KQRNEIRQQKQLQEKRLRDEKIKEIANRSKRRRY. The span at 132-145 shows a compositional bias: low complexity; it reads PNQEQQQQSSSSSS. A compositionally biased stretch (basic and acidic residues) spans 253 to 279; that stretch reads KQRNEIRQQKQLQEKRLRDEKIKEIAN.

The protein belongs to the SNW family. As to quaternary structure, associated with the spliceosome.

It is found in the nucleus. Involved in pre-mRNA splicing. This chain is Pre-mRNA-processing protein 45 (PRP45), found in Candida albicans (strain SC5314 / ATCC MYA-2876) (Yeast).